The chain runs to 961 residues: Retinoblastoma-related protein 1 (961 aa).

Positions 404 to 606 are domain A; sequence TPVSTAMTTA…EKGSSMYNSL (203 aa). The segment at 404–819 is pocket; that stretch reads TPVSTAMTTA…NEMFIPSVKP (416 aa). The tract at residues 607–728 is spacer; sequence AVAKPSLAAE…PGGGGETCAE (122 aa). The interval 729–819 is domain B; the sequence is TAINVFFGKI…NEMFIPSVKP (91 aa). Residues 829–856 form a disordered region; that stretch reads NAEKNNHNDGQGPASPKPSPFPKLPDMS.

This sequence belongs to the retinoblastoma protein (RB) family.

It is found in the nucleus. Regulator of biological processes that recruits a histone deacetylase to control gene transcription. May play a role in the entry into mitosis, negatively regulating the cell proliferation. Formation of stable complexes with geminiviridae replication-associated proteins may create a cellular environment which favors viral DNA replication. This is Retinoblastoma-related protein 1 (RB1) from Nicotiana tabacum (Common tobacco).